The following is a 286-amino-acid chain: Aminoglycoside N(3)-acetyltransferase III (286 aa).

Belongs to the antibiotic N-acetyltransferase family.

It catalyses the reaction a 2-deoxystreptamine antibiotic + acetyl-CoA = an N(3)-acetyl-2-deoxystreptamine antibiotic + CoA + H(+). Its function is as follows. Resistance to antibiotics containing the 2-deoxy-streptamine ring including gentamicin, kanamycin, tobramycin, neomycin and apramycin. The sequence is that of Aminoglycoside N(3)-acetyltransferase III (aacC3) from Salmonella sp.